The following is a 409-amino-acid chain: Gamma-glutamyl phosphate reductase (409 aa).

The protein belongs to the gamma-glutamyl phosphate reductase family.

The protein localises to the cytoplasm. The catalysed reaction is L-glutamate 5-semialdehyde + phosphate + NADP(+) = L-glutamyl 5-phosphate + NADPH + H(+). It participates in amino-acid biosynthesis; L-proline biosynthesis; L-glutamate 5-semialdehyde from L-glutamate: step 2/2. Its function is as follows. Catalyzes the NADPH-dependent reduction of L-glutamate 5-phosphate into L-glutamate 5-semialdehyde and phosphate. The product spontaneously undergoes cyclization to form 1-pyrroline-5-carboxylate. The chain is Gamma-glutamyl phosphate reductase from Bartonella tribocorum (strain CIP 105476 / IBS 506).